The following is a 51-amino-acid chain: Lantibiotic lacticin-481 (51 aa).

Residues 1 to 24 constitute a propeptide that is removed on maturation; it reads MKEQNSFNLLQEVTESELDLILGA. The beta-methyllanthionine (Thr-Cys) cross-link spans 33–38; it reads TISHEC. 2 cross-links (lanthionine (Ser-Cys)) span residues 35–49 and 42–50; these read SHECNMNSWQFVFTC and SWQFVFTCC. (Z)-2,3-didehydrobutyrine is present on T48.

Belongs to the type A lantibiotic family. Monomer or homodimer. Maturation of lantibiotics involves the enzymatic conversion of Thr, and Ser into dehydrated AA and the formation of thioether bonds with cysteine. This is followed by membrane translocation and cleavage of the modified precursor. Post-translationally, it is established that the 2,3-didehydrobutyrine is the Z-isomer.

In terms of biological role, lanthionine-containing peptide antibiotic (lantibiotic) active on Gram-positive bacteria. The bactericidal activity of lantibiotics is based on depolarization of energized bacterial cytoplasmic membranes, initiated by the formation of aqueous transmembrane pores. Lacticin 481 is a broad spectrum bacteriocin exhibiting activity against a wide range of lactic acid bacteria and C.tyrobutyricum. This Lactococcus lactis subsp. lactis (Streptococcus lactis) protein is Lantibiotic lacticin-481 (lctA).